The chain runs to 309 residues: Syndecan-1 (309 aa).

A signal peptide spans 1 to 22; sequence MRRAALWLWLCALALRLQPVLP. Residues 24-253 lie on the Extracellular side of the membrane; it reads IMAVNVPPED…GLLDRKEVLG (230 aa). Disordered stretches follow at residues 28–57 and 142–185; these read NVPP…DITL and ARAT…GGTS. A compositionally biased stretch (acidic residues) spans 32-42; sequence EDQDGSGDDSD. A glycan (O-linked (Xyl...) (chondroitin sulfate) serine) is linked at S37. N-linked (GlcNAc...) asparagine glycosylation occurs at N43. S45 and S47 each carry an O-linked (Xyl...) (heparan sulfate) serine glycan. Polar residues predominate over residues 142-151; sequence ARATTAQAPV. O-linked (Xyl...) (chondroitin sulfate) serine glycosylation is found at S205 and S215. A helical membrane pass occupies residues 254–274; that stretch reads GVIAGGLVGLIFAVCLVGFML. Residues 275–309 are Cytoplasmic-facing; the sequence is YRMKKKDEGSYSLEEPKQANGGAYQKPTKQEEFYA. The interval 283–309 is disordered; sequence GSYSLEEPKQANGGAYQKPTKQEEFYA. Position 284 is a phosphoserine (S284).

It belongs to the syndecan proteoglycan family. As to quaternary structure, interacts with CDCP1. Interacts (via C-terminus) with TIAM1 (via PDZ domain). Interacts with MDK. Post-translationally, shedding is enhanced by a number of factors such as heparanase, thrombin or EGF. Also by stress and wound healing. PMA-mediated shedding is inhibited by TIMP3.

It is found in the membrane. The protein resides in the secreted. The protein localises to the extracellular exosome. Its function is as follows. Cell surface proteoglycan that contains both heparan sulfate and chondroitin sulfate and that links the cytoskeleton to the interstitial matrix. Regulates exosome biogenesis in concert with SDCBP and PDCD6IP. Able to induce its own expression in dental mesenchymal cells and also in the neighboring dental epithelial cells via an MSX1-mediated pathway. This is Syndecan-1 from Cricetulus griseus (Chinese hamster).